The sequence spans 218 residues: Ras-related protein RABA5e (218 aa).

Residue 19 to 26 (GDSAVGKS) coordinates GTP. The Effector region motif lies at 41–49 (SKATIGVEF). GTP-binding positions include 67 to 71 (DTAGQ), 125 to 128 (NKCD), and 155 to 156 (SA). 2 S-geranylgeranyl cysteine lipidation sites follow: cysteine 214 and cysteine 215. Cysteine methyl ester is present on cysteine 215. Residues 216 to 218 (SST) constitute a propeptide, removed in mature form.

This sequence belongs to the small GTPase superfamily. Rab family.

It localises to the cell membrane. Its function is as follows. Intracellular vesicle trafficking and protein transport. This is Ras-related protein RABA5e (RABA5E) from Arabidopsis thaliana (Mouse-ear cress).